A 357-amino-acid polypeptide reads, in one-letter code: Protein-glutamate methylesterase/protein-glutamine glutaminase (357 aa).

The Response regulatory domain maps to 3–120 (RVIVVDDSAF…LASMDLAALS (118 aa)). At Asp54 the chain carries 4-aspartylphosphate. Positions 165–357 (ERSRRDIIAI…AERVASALYK (193 aa)) constitute a CheB-type methylesterase domain. Catalysis depends on residues Ser177, His204, and Asp300.

It belongs to the CheB family. Post-translationally, phosphorylated by CheA. Phosphorylation of the N-terminal regulatory domain activates the methylesterase activity.

It localises to the cytoplasm. The catalysed reaction is [protein]-L-glutamate 5-O-methyl ester + H2O = L-glutamyl-[protein] + methanol + H(+). The enzyme catalyses L-glutaminyl-[protein] + H2O = L-glutamyl-[protein] + NH4(+). Involved in chemotaxis. Part of a chemotaxis signal transduction system that modulates chemotaxis in response to various stimuli. Catalyzes the demethylation of specific methylglutamate residues introduced into the chemoreceptors (methyl-accepting chemotaxis proteins or MCP) by CheR. Also mediates the irreversible deamidation of specific glutamine residues to glutamic acid. The polypeptide is Protein-glutamate methylesterase/protein-glutamine glutaminase (Lawsonia intracellularis (strain PHE/MN1-00)).